Here is a 687-residue protein sequence, read N- to C-terminus: Ferric vulnibactin receptor VuuA (687 aa).

The first 37 residues, 1–37 (MAALRPARTSVAEKKTFKLHALSAVVMGLCASGQAYA), serve as a signal peptide directing secretion. A TBDR plug domain is found at 63 to 185 (TIYDTSSSVQ…SAGAIVMKTN (123 aa)). The region spanning 190 to 687 (HFESAVKAGV…MIGASLQLNF (498 aa)) is the TBDR beta-barrel domain. A TonB C-terminal box motif is present at residues 670-687 (EPLKQQPRMIGASLQLNF).

This sequence belongs to the TonB-dependent receptor family.

It localises to the cell outer membrane. Involved in the uptake of iron in complex with vulnibactin, a catecholate siderophore synthesized by V.vulnificus. Binds and transports ferric vulnibactin across the outer membrane. The energy source is provided by the inner membrane TonB system. In Vibrio vulnificus, this protein is Ferric vulnibactin receptor VuuA.